We begin with the raw amino-acid sequence, 205 residues long: Isochorismatase domain-containing protein 2 (205 aa).

Phosphoserine occurs at positions 7 and 202.

It belongs to the isochorismatase family. As to quaternary structure, interacts with CDKN2A.

It is found in the cytoplasm. The protein resides in the nucleus. This chain is Isochorismatase domain-containing protein 2 (ISOC2), found in Pongo abelii (Sumatran orangutan).